A 659-amino-acid polypeptide reads, in one-letter code: tRNA 5-methylaminomethyl-2-thiouridine biosynthesis bifunctional protein MnmC (659 aa).

The interval 1–236 (MKPVMPHAQL…KWEILRGEFL (236 aa)) is tRNA (mnm(5)s(2)U34)-methyltransferase. Positions 267-659 (IGAGLAGCAT…FALRRLIRGK (393 aa)) are FAD-dependent cmnm(5)s(2)U34 oxidoreductase.

In the N-terminal section; belongs to the methyltransferase superfamily. tRNA (mnm(5)s(2)U34)-methyltransferase family. The protein in the C-terminal section; belongs to the DAO family. Requires FAD as cofactor.

It is found in the cytoplasm. The catalysed reaction is 5-aminomethyl-2-thiouridine(34) in tRNA + S-adenosyl-L-methionine = 5-methylaminomethyl-2-thiouridine(34) in tRNA + S-adenosyl-L-homocysteine + H(+). Its function is as follows. Catalyzes the last two steps in the biosynthesis of 5-methylaminomethyl-2-thiouridine (mnm(5)s(2)U) at the wobble position (U34) in tRNA. Catalyzes the FAD-dependent demodification of cmnm(5)s(2)U34 to nm(5)s(2)U34, followed by the transfer of a methyl group from S-adenosyl-L-methionine to nm(5)s(2)U34, to form mnm(5)s(2)U34. This chain is tRNA 5-methylaminomethyl-2-thiouridine biosynthesis bifunctional protein MnmC, found in Pseudomonas fluorescens (strain Pf0-1).